The sequence spans 180 residues: MAITTAGDICALYPLCPILLHCSTLMHLSPLRNTPHVLHAAAAVTEYAFVLSTLVFPSFCFSLPSPFPFPEGEGGAFYVRLFLNALSEEVLFRAYIPERLCHHATSCTARACGEVLSVLLFALAHRPAGSATLFAGAAGAALRVLFVREKKRSGSRARASALCTAVHALWNAYAIAAAAR.

The next 2 helical transmembrane spans lie at 37 to 59 and 128 to 147; these read VLHA…FPSF and AGSA…VLFV.

Its subcellular location is the cell membrane. This is an uncharacterized protein from Treponema pallidum (strain Nichols).